We begin with the raw amino-acid sequence, 414 residues long: Glutamyl-tRNA reductase (414 aa).

Substrate is bound by residues threonine 49–arginine 52, serine 108, glutamate 113–glutamine 115, and glutamine 119. Catalysis depends on cysteine 50, which acts as the Nucleophile. Glycine 188–glycine 193 contacts NADP(+).

Belongs to the glutamyl-tRNA reductase family. Homodimer.

The enzyme catalyses (S)-4-amino-5-oxopentanoate + tRNA(Glu) + NADP(+) = L-glutamyl-tRNA(Glu) + NADPH + H(+). It functions in the pathway porphyrin-containing compound metabolism; protoporphyrin-IX biosynthesis; 5-aminolevulinate from L-glutamyl-tRNA(Glu): step 1/2. Functionally, catalyzes the NADPH-dependent reduction of glutamyl-tRNA(Glu) to glutamate 1-semialdehyde (GSA). The sequence is that of Glutamyl-tRNA reductase from Francisella philomiragia subsp. philomiragia (strain ATCC 25017 / CCUG 19701 / FSC 153 / O#319-036).